The following is a 315-amino-acid chain: Tubulin beta-1 chain (315 aa).

Residues serine 6, glycine 10, threonine 11, glycine 12, asparagine 72, and asparagine 94 each contribute to the GTP site. The segment at 295-315 (DATADEEEYYEDEEEEEAQGM) is disordered. The span at 297–315 (TADEEEYYEDEEEEEAQGM) shows a compositional bias: acidic residues.

Belongs to the tubulin family. In terms of assembly, dimer of alpha and beta chains. A typical microtubule is a hollow water-filled tube with an outer diameter of 25 nm and an inner diameter of 15 nM. Alpha-beta heterodimers associate head-to-tail to form protofilaments running lengthwise along the microtubule wall with the beta-tubulin subunit facing the microtubule plus end conferring a structural polarity. Microtubules usually have 13 protofilaments but different protofilament numbers can be found in some organisms and specialized cells. The cofactor is Mg(2+).

It localises to the cytoplasm. Its subcellular location is the cytoskeleton. Its function is as follows. Tubulin is the major constituent of microtubules, a cylinder consisting of laterally associated linear protofilaments composed of alpha- and beta-tubulin heterodimers. Microtubules grow by the addition of GTP-tubulin dimers to the microtubule end, where a stabilizing cap forms. Below the cap, tubulin dimers are in GDP-bound state, owing to GTPase activity of alpha-tubulin. The protein is Tubulin beta-1 chain (TUBB1) of Daucus carota (Wild carrot).